The chain runs to 86 residues: Precursor of CEP4 (86 aa).

An N-terminal signal peptide occupies residues 1-30 (MVSRGCSITVLFRFLIVLLVIQVHFENTKA). The propeptide occupies 31–64 (ARHAPVVSWSPPEPPKDDFVWYHKINRFKNIEQD). A disordered region spans residues 63–86 (QDAFRPTHQGPSQGIGHKNPPGAP). P68 and P73 each carry hydroxyproline. Positions 80–86 (KNPPGAP) are excised as a propeptide.

It belongs to the C-terminally encoded plant signaling peptide (CEP) family. Interacts with CEP receptors (e.g. CEPR1 and CEPR2). Post-translationally, the mature small signaling peptide is generated by proteolytic processing of the longer precursor. Expressed at low levels in flowers. Present in lateral roots, shoot apical meristem (SAM), flowers and siliques.

The protein localises to the secreted. Its subcellular location is the extracellular space. It is found in the apoplast. Functionally, extracellular signaling peptide that represses primary root growth rate. Promotes shoot growth and modulates leaf morphology. Regulates systemic nitrogen (N)-demand signaling. Mediates up-regulation of genes involved in N uptake and assimilation pathways. The chain is Precursor of CEP4 from Arabidopsis thaliana (Mouse-ear cress).